The chain runs to 380 residues: Tryptophan 2,3-dioxygenase (380 aa).

Substrate is bound by residues 57 to 61 (FIITH) and arginine 128. Position 313 (histidine 313) interacts with heme. Residue threonine 328 coordinates substrate.

This sequence belongs to the tryptophan 2,3-dioxygenase family. In terms of assembly, homotetramer. Dimer of dimers. The cofactor is heme.

The catalysed reaction is L-tryptophan + O2 = N-formyl-L-kynurenine. It participates in amino-acid degradation; L-tryptophan degradation via kynurenine pathway; L-kynurenine from L-tryptophan: step 1/2. The protein operates within pigment biosynthesis; ommochrome biosynthesis. In terms of biological role, heme-dependent dioxygenase that catalyzes the oxidative cleavage of the L-tryptophan (L-Trp) pyrrole ring and converts L-tryptophan to N-formyl-L-kynurenine. Catalyzes the oxidative cleavage of the indole moiety. The polypeptide is Tryptophan 2,3-dioxygenase (Drosophila willistoni (Fruit fly)).